A 391-amino-acid polypeptide reads, in one-letter code: Decapping nuclease RAI1 (391 aa).

Glu-174 is an a divalent metal cation binding site. Glu-223 is a substrate binding site. Residues Asp-225, Glu-244, and Leu-245 each contribute to the a divalent metal cation site. Lys-246 and Gln-270 together coordinate substrate.

The protein belongs to the DXO/Dom3Z family. As to quaternary structure, interacts with RAT1; the interaction is direct, stabilizes RAT1 protein structure and stimulates its exoribonuclease activity. The interaction also stimulates RAI1 pyrophosphohydrolase activity, probably by recruiting it to mRNA substrates. It depends on a divalent metal cation as a cofactor.

The protein resides in the nucleus. It catalyses the reaction a 5'-end NAD(+)-phospho-ribonucleoside in mRNA + H2O = a 5'-end phospho-ribonucleoside in mRNA + NAD(+) + H(+). The enzyme catalyses a 5'-end (N(7)-methyl 5'-triphosphoguanosine)-ribonucleoside-ribonucleotide in mRNA + H2O = a (N(7)-methyl 5'-triphosphoguanosine)-nucleoside + a 5'-end phospho-ribonucleoside in mRNA + H(+). The catalysed reaction is a 5'-end triphospho-ribonucleoside in mRNA + H2O = a 5'-end phospho-ribonucleoside in mRNA + diphosphate + H(+). In terms of biological role, decapping enzyme for NAD-capped RNAs: specifically hydrolyzes the nicotinamide adenine dinucleotide (NAD) cap from a subset of RNAs by removing the entire NAD moiety from the 5'-end of an NAD-capped RNA. The NAD-cap is present at the 5'-end of some RNAs and snoRNAs. In contrast to the canonical 5'-end N7 methylguanosine (m7G) cap, the NAD cap promotes mRNA decay. Also acts as a non-canonical decapping enzyme that removes the entire cap structure of m7G capped or incompletely capped RNAs. Has decapping activity toward incomplete 5'-end m7G cap mRNAs such as unmethylated 5'-end-capped RNA (cap0), while it has no activity toward 2'-O-ribose methylated m7G cap (cap1). Also possesses RNA 5'-pyrophosphohydrolase activity by hydrolyzing the 5'-end triphosphate to release pyrophosphates. Stimulates exoribonuclease activity of Rat1, allowing it to degrade RNAs with stable secondary structure more effectively. The chain is Decapping nuclease RAI1 from Candida albicans (strain SC5314 / ATCC MYA-2876) (Yeast).